A 436-amino-acid chain; its full sequence is Trigger factor (436 aa).

Residues 162–247 (GDRVIIDFEG…LNNVSEPTLP (86 aa)) enclose the PPIase FKBP-type domain.

The protein belongs to the FKBP-type PPIase family. Tig subfamily.

It localises to the cytoplasm. It carries out the reaction [protein]-peptidylproline (omega=180) = [protein]-peptidylproline (omega=0). Functionally, involved in protein export. Acts as a chaperone by maintaining the newly synthesized protein in an open conformation. Functions as a peptidyl-prolyl cis-trans isomerase. This chain is Trigger factor, found in Neisseria gonorrhoeae (strain ATCC 700825 / FA 1090).